An 853-amino-acid polypeptide reads, in one-letter code: Probable inorganic carbon transporter subunit DabA (853 aa).

Residues 1–21 (MSHANSEETMMNTAVAHPSTS) form a disordered region. The span at 7–21 (EETMMNTAVAHPSTS) shows a compositional bias: polar residues. 4 residues coordinate Zn(2+): cysteine 364, aspartate 366, histidine 546, and cysteine 561.

This sequence belongs to the inorganic carbon transporter (TC 9.A.2) DabA family. In terms of assembly, forms a complex with DabB. Zn(2+) is required as a cofactor.

The protein resides in the cell inner membrane. In terms of biological role, part of an energy-coupled inorganic carbon pump. The chain is Probable inorganic carbon transporter subunit DabA from Methylovorus glucosotrophus (strain SIP3-4).